We begin with the raw amino-acid sequence, 245 residues long: 8-amino-3,8-dideoxy-manno-octulosonate cytidylyltransferase (245 aa).

This sequence belongs to the KdsB family.

Its subcellular location is the cytoplasm. The catalysed reaction is 8-amino-3,8-dideoxy-alpha-D-manno-octulosonate + CTP = CMP-8-amino-3,8-dideoxy-alpha-D-manno-oct-2-ulosonate + diphosphate. Its pathway is bacterial outer membrane biogenesis; lipopolysaccharide biosynthesis. Functionally, activates KDO8N (a required 8-carbon sugar) for incorporation into bacterial lipopolysaccharide in the Shewanella genus. This is 8-amino-3,8-dideoxy-manno-octulosonate cytidylyltransferase from Shewanella halifaxensis (strain HAW-EB4).